We begin with the raw amino-acid sequence, 158 residues long: Transcription elongation factor GreA (158 aa).

The protein belongs to the GreA/GreB family.

Functionally, necessary for efficient RNA polymerase transcription elongation past template-encoded arresting sites. The arresting sites in DNA have the property of trapping a certain fraction of elongating RNA polymerases that pass through, resulting in locked ternary complexes. Cleavage of the nascent transcript by cleavage factors such as GreA or GreB allows the resumption of elongation from the new 3'terminus. GreA releases sequences of 2 to 3 nucleotides. This Rhizobium etli (strain ATCC 51251 / DSM 11541 / JCM 21823 / NBRC 15573 / CFN 42) protein is Transcription elongation factor GreA.